Here is a 66-residue protein sequence, read N- to C-terminus: Potassium channel toxin alpha-KTx 27.3 (66 aa).

Residues 1–17 (MKLMWLLFLCVLAFSIA) form the signal peptide.

It belongs to the short scorpion toxin superfamily. Potassium channel inhibitor family. Alpha-KTx 27 subfamily. Post-translationally, contains 4 disulfide bonds. As to expression, expressed by the venom gland.

The protein resides in the secreted. The protein is Potassium channel toxin alpha-KTx 27.3 of Lychas mucronatus (Chinese swimming scorpion).